An 80-amino-acid chain; its full sequence is D-alanyl carrier protein (80 aa).

One can recognise a Carrier domain in the interval 1 to 77; that stretch reads MDIQKQIVDI…KLVEQVKKLQ (77 aa). At Ser35 the chain carries O-(pantetheine 4'-phosphoryl)serine.

Belongs to the DltC family. Post-translationally, 4'-phosphopantetheine is transferred from CoA to a specific serine of apo-DCP.

Its subcellular location is the cytoplasm. It functions in the pathway cell wall biogenesis; lipoteichoic acid biosynthesis. Functionally, carrier protein involved in the D-alanylation of lipoteichoic acid (LTA). The loading of thioester-linked D-alanine onto DltC is catalyzed by D-alanine--D-alanyl carrier protein ligase DltA. The DltC-carried D-alanyl group is further transferred to cell membrane phosphatidylglycerol (PG) by forming an ester bond, probably catalyzed by DltD. D-alanylation of LTA plays an important role in modulating the properties of the cell wall in Gram-positive bacteria, influencing the net charge of the cell wall. The chain is D-alanyl carrier protein from Lactobacillus delbrueckii subsp. bulgaricus (strain ATCC 11842 / DSM 20081 / BCRC 10696 / JCM 1002 / NBRC 13953 / NCIMB 11778 / NCTC 12712 / WDCM 00102 / Lb 14).